The following is a 90-amino-acid chain: Cell division protein CrgA (90 aa).

The interval 1 to 26 is disordered; the sequence is MPKAKVTKNSIAPVSSNPSANRTPVK. Residues 7–26 show a composition bias toward polar residues; the sequence is TKNSIAPVSSNPSANRTPVK. The next 2 helical transmembrane spans lie at 38-58 and 69-89; these read VIMFAFMLVGLLWLVANYLVG and AWNYGIGFGLLIIGLLMTMGW.

Belongs to the CrgA family.

The protein resides in the cell membrane. In terms of biological role, involved in cell division. The protein is Cell division protein CrgA of Corynebacterium efficiens (strain DSM 44549 / YS-314 / AJ 12310 / JCM 11189 / NBRC 100395).